A 124-amino-acid chain; its full sequence is Small ribosomal subunit protein uS12 (124 aa).

D89 bears the 3-methylthioaspartic acid mark. The interval 102 to 124 is disordered; the sequence is LDTSGVNNRKHGRSKYGTKRPKS. The span at 109–124 shows a compositional bias: basic residues; that stretch reads NRKHGRSKYGTKRPKS.

Belongs to the universal ribosomal protein uS12 family. As to quaternary structure, part of the 30S ribosomal subunit. Contacts proteins S8 and S17. May interact with IF1 in the 30S initiation complex.

Functionally, with S4 and S5 plays an important role in translational accuracy. Interacts with and stabilizes bases of the 16S rRNA that are involved in tRNA selection in the A site and with the mRNA backbone. Located at the interface of the 30S and 50S subunits, it traverses the body of the 30S subunit contacting proteins on the other side and probably holding the rRNA structure together. The combined cluster of proteins S8, S12 and S17 appears to hold together the shoulder and platform of the 30S subunit. This is Small ribosomal subunit protein uS12 from Francisella philomiragia subsp. philomiragia (strain ATCC 25017 / CCUG 19701 / FSC 153 / O#319-036).